Reading from the N-terminus, the 329-residue chain is Uroporphyrinogen decarboxylase (329 aa).

Substrate-binding positions include 22-26 (RQVGR), D71, Y140, S195, and H307.

It belongs to the uroporphyrinogen decarboxylase family. Homodimer.

The protein localises to the cytoplasm. It carries out the reaction uroporphyrinogen III + 4 H(+) = coproporphyrinogen III + 4 CO2. The protein operates within porphyrin-containing compound metabolism; protoporphyrin-IX biosynthesis; coproporphyrinogen-III from 5-aminolevulinate: step 4/4. Its function is as follows. Catalyzes the decarboxylation of four acetate groups of uroporphyrinogen-III to yield coproporphyrinogen-III. This Chlamydia pneumoniae (Chlamydophila pneumoniae) protein is Uroporphyrinogen decarboxylase.